The sequence spans 59 residues: Large ribosomal subunit protein bL33 (59 aa).

Positions 26 to 59 are disordered; it reads RYTTTKNKKNNTERLVLKKYNPNLKKHTEHKEIK.

The protein belongs to the bacterial ribosomal protein bL33 family.

The chain is Large ribosomal subunit protein bL33 from Chlorobium phaeobacteroides (strain BS1).